The chain runs to 1248 residues: Ankyrin repeat and sterile alpha motif domain-containing protein 1B (1248 aa).

7 ANK repeats span residues glycine 2–leucine 31, serine 58–valine 87, lysine 91–arginine 120, glutamate 127–isoleucine 156, lysine 160–serine 189, arginine 193–cysteine 222, and glutamate 225–isoleucine 254. The interval glutamate 296–glutamate 322 is disordered. The segment covering glutamate 305–glutamate 322 has biased composition (polar residues). Phosphoserine is present on residues serine 309, serine 310, serine 314, serine 353, and serine 364. Disordered regions lie at residues glutamate 367–glycine 400, alanine 474–alanine 514, and serine 558–phenylalanine 623. Residues asparagine 371 to leucine 384 show a composition bias toward polar residues. Over residues glutamate 388 to asparagine 397 the composition is skewed to acidic residues. Position 503 is a phosphothreonine (threonine 503). Residues serine 507 and serine 510 each carry the phosphoserine modification. Low complexity predominate over residues serine 558–threonine 575. The segment covering valine 577–aspartate 601 has biased composition (basic and acidic residues). Phosphoserine is present on serine 738. The segment at glutamate 749–threonine 777 is disordered. Polar residues predominate over residues arginine 753–glutamate 763. Residue threonine 773 is modified to Phosphothreonine. Serine 775 bears the Phosphoserine mark. 2 consecutive SAM domains span residues cysteine 810–methionine 876 and tyrosine 884–aspartate 949. The residue at position 901 (tyrosine 901) is a Phosphotyrosine. A Nuclear localization signal motif is present at residues histidine 935–arginine 938. The disordered stretch occupies residues glycine 944–aspartate 989. Positions threonine 969 to threonine 984 are enriched in low complexity. Serine 974 bears the Phosphoserine mark. Tyrosine 1007 is subject to Phosphotyrosine. Positions isoleucine 1056–isoleucine 1213 constitute a PID domain. The tract at residues histidine 1197–phenylalanine 1248 is disordered. Basic and acidic residues predominate over residues proline 1236–phenylalanine 1248.

In terms of assembly, isoform 3 interacts with DLG4. Interacts with EPHA8. Isoform 2 interacts with COIL. Isoform 4 interacts with APP and EPHA8. Isoform 6 interacts with EPHA8. In terms of processing, isoform 3 nuclear translocation requires an NMDAR-dependent proteolytic cleavage. As to expression, highly expressed in marrow from patients with pre-B ALL associated with the t(1;19) translocation. Strongly expressed in brain and testis. Expressed in fetal brain. Isoform 4 is highly expressed in brain (at protein level). Isoform 6 is expressed in brain and several cancer cell lines.

The protein localises to the cytoplasm. Its subcellular location is the nucleus. The protein resides in the postsynaptic density. It is found in the cell projection. It localises to the dendritic spine. The protein localises to the cajal body. Functionally, isoform 2 may participate in the regulation of nucleoplasmic coilin protein interactions in neuronal and transformed cells. Isoform 3 can regulate global protein synthesis by altering nucleolar numbers. In terms of biological role, isoform 4 may play a role as a modulator of APP processing. Overexpression can down-regulate APP processing. This is Ankyrin repeat and sterile alpha motif domain-containing protein 1B (ANKS1B) from Homo sapiens (Human).